A 169-amino-acid polypeptide reads, in one-letter code: Peptide methionine sulfoxide reductase MsrA (169 aa).

Residue cysteine 10 is part of the active site.

The protein belongs to the MsrA Met sulfoxide reductase family.

The catalysed reaction is L-methionyl-[protein] + [thioredoxin]-disulfide + H2O = L-methionyl-(S)-S-oxide-[protein] + [thioredoxin]-dithiol. The enzyme catalyses [thioredoxin]-disulfide + L-methionine + H2O = L-methionine (S)-S-oxide + [thioredoxin]-dithiol. Its function is as follows. Has an important function as a repair enzyme for proteins that have been inactivated by oxidation. Catalyzes the reversible oxidation-reduction of methionine sulfoxide in proteins to methionine. In Streptococcus agalactiae serotype Ia (strain ATCC 27591 / A909 / CDC SS700), this protein is Peptide methionine sulfoxide reductase MsrA.